The sequence spans 67 residues: uncharacterized protein (67 aa).

This is an uncharacterized protein from Archaeoglobus fulgidus (strain ATCC 49558 / DSM 4304 / JCM 9628 / NBRC 100126 / VC-16).